Here is a 368-residue protein sequence, read N- to C-terminus: Endophilin-A2 (368 aa).

Positions 1-21 (MSVAGLKKQFYKASQLVSEKV) are membrane-binding amphipathic helix. Positions 18-249 (SEKVGGAEGT…LKRRVREASS (232 aa)) constitute a BAR domain. Positions 60 to 87 (PNPASRAKLTMLNTVSKIRGQVKNPGYP) are required for dimerization upon membrane association. The stretch at 180 to 250 (DEELRQALEK…KRRVREASSR (71 aa)) forms a coiled coil. The interaction with ARC stretch occupies residues 218 to 254 (LVDAQLDYHRQAVQILEELADKLKRRVREASSRPKRE). The tract at residues 244 to 307 (VREASSRPKR…MPSKSMPPLD (64 aa)) is disordered. Over residues 245-263 (REASSRPKREFKPRPREPF) the composition is skewed to basic and acidic residues. 2 positions are modified to phosphoserine: S288 and S292. Residues 306 to 365 (LDQPSCKALYDFEPENDGELGFREGDLITLTNQIDENWYEGMLHGQSGFFPLSYVQVLVP) enclose the SH3 domain. Residue Y315 is modified to Phosphotyrosine.

The protein belongs to the endophilin family. Interacts with ARC, SYNJ1 and DNM1. Interacts with PDCD6IP. Interacts with BIN2.

It localises to the cytoplasm. Its subcellular location is the early endosome membrane. It is found in the cell projection. The protein resides in the podosome. Implicated in endocytosis. May recruit other proteins to membranes with high curvature. The sequence is that of Endophilin-A2 (Sh3gl1) from Mus musculus (Mouse).